The chain runs to 338 residues: Ketol-acid reductoisomerase (NADP(+)) (338 aa).

Residues 1 to 181 form the KARI N-terminal Rossmann domain; the sequence is MKVFYDKDCD…GGGKAGIIET (181 aa). NADP(+) is bound by residues 24–27, arginine 47, and serine 52; that span reads YGSQ. Histidine 107 is a catalytic residue. Glycine 133 contributes to the NADP(+) binding site. One can recognise a KARI C-terminal knotted domain in the interval 182–327; the sequence is NFREETETDL…EKLRAMMPWI (146 aa). Mg(2+) contacts are provided by aspartate 190, glutamate 194, glutamate 226, and glutamate 230. Serine 251 contacts substrate.

Belongs to the ketol-acid reductoisomerase family. The cofactor is Mg(2+).

It catalyses the reaction (2R)-2,3-dihydroxy-3-methylbutanoate + NADP(+) = (2S)-2-acetolactate + NADPH + H(+). The enzyme catalyses (2R,3R)-2,3-dihydroxy-3-methylpentanoate + NADP(+) = (S)-2-ethyl-2-hydroxy-3-oxobutanoate + NADPH + H(+). Its pathway is amino-acid biosynthesis; L-isoleucine biosynthesis; L-isoleucine from 2-oxobutanoate: step 2/4. It participates in amino-acid biosynthesis; L-valine biosynthesis; L-valine from pyruvate: step 2/4. Functionally, involved in the biosynthesis of branched-chain amino acids (BCAA). Catalyzes an alkyl-migration followed by a ketol-acid reduction of (S)-2-acetolactate (S2AL) to yield (R)-2,3-dihydroxy-isovalerate. In the isomerase reaction, S2AL is rearranged via a Mg-dependent methyl migration to produce 3-hydroxy-3-methyl-2-ketobutyrate (HMKB). In the reductase reaction, this 2-ketoacid undergoes a metal-dependent reduction by NADPH to yield (R)-2,3-dihydroxy-isovalerate. The protein is Ketol-acid reductoisomerase (NADP(+)) of Polaromonas sp. (strain JS666 / ATCC BAA-500).